Consider the following 106-residue polypeptide: Transcriptional and immune response regulator (106 aa).

Monomer. Interacts with NOTCH2 (via ANK repeats), the interaction inhibits the nuclear translocation of NOTCH2 N2ICD. Interacts (C-terminus) with CBY1 (C-terminus), TCIM competes with CTNNB1 for the interaction with CBY1. In terms of tissue distribution, ubiquitous. Expressed in thyroid papillary carcinoma. Expressed in liver, expression levels decrease in hepatocellular carcinoma. Slightly detected in normal lung, its expression is highly induced in lung cancer cells (at protein level).

It localises to the cytoplasm. Its subcellular location is the nucleus. The protein localises to the nucleolus. The protein resides in the nucleus speckle. Seems to be involved in the regulation of cell growth an differentiation, may play different and opposite roles depending on the tissue or cell type. May enhance the WNT-CTNNB1 pathway by relieving antagonistic activity of CBY1. Enhances the proliferation of follicular dendritic cells. Plays a role in the mitogen-activated MAPK2/3 signaling pathway, positively regulates G1-to-S-phase transition of the cell cycle. In endothelial cells, enhances key inflammatory mediators and inflammatory response through the modulation of NF-kappaB transcriptional regulatory activity. Involved in the regulation of heat shock response, seems to play a positive feedback with HSF1 to modulate heat-shock downstream gene expression. Plays a role in the regulation of hematopoiesis even if the mechanisms are unknown. In cancers such as thyroid or lung cancer, it has been described as promoter of cell proliferation, G1-to-S-phase transition and inhibitor of apoptosis. However, it negatively regulates self-renewal of liver cancer cells via suppresion of NOTCH2 signaling. The sequence is that of Transcriptional and immune response regulator from Homo sapiens (Human).